The sequence spans 252 residues: 2-succinyl-6-hydroxy-2,4-cyclohexadiene-1-carboxylate synthase (252 aa).

Belongs to the AB hydrolase superfamily. MenH family. Monomer.

The catalysed reaction is 5-enolpyruvoyl-6-hydroxy-2-succinyl-cyclohex-3-ene-1-carboxylate = (1R,6R)-6-hydroxy-2-succinyl-cyclohexa-2,4-diene-1-carboxylate + pyruvate. It participates in quinol/quinone metabolism; 1,4-dihydroxy-2-naphthoate biosynthesis; 1,4-dihydroxy-2-naphthoate from chorismate: step 3/7. The protein operates within quinol/quinone metabolism; menaquinone biosynthesis. Functionally, catalyzes a proton abstraction reaction that results in 2,5-elimination of pyruvate from 2-succinyl-5-enolpyruvyl-6-hydroxy-3-cyclohexene-1-carboxylate (SEPHCHC) and the formation of 2-succinyl-6-hydroxy-2,4-cyclohexadiene-1-carboxylate (SHCHC). This chain is 2-succinyl-6-hydroxy-2,4-cyclohexadiene-1-carboxylate synthase, found in Escherichia coli (strain SMS-3-5 / SECEC).